The sequence spans 507 residues: Hippocampus abundant transcript-like protein 1 (507 aa).

The tract at residues 1–22 (MSTDGESPEEPGWKAVASPKAS) is disordered. The Extracellular portion of the chain corresponds to 1–51 (MSTDGESPEEPGWKAVASPKASAMPEKRGSAQAASSSWLQGFGQPSVYHAA). A helical membrane pass occupies residues 52–72 (FVIFFEFFAWGLLTTPMLTVL). At 73 to 84 (HETFPQHTFLMN) the chain is on the cytoplasmic side. A helical membrane pass occupies residues 85 to 105 (GLIQGVKGLLSFLSAPLIGAL). Residues 106 to 113 (SDVWGRKP) are Extracellular-facing. The helical transmembrane segment at 114 to 134 (FLLGTVFFTCFPIPLMRISPW) threads the bilayer. At 135-136 (WY) the chain is on the cytoplasmic side. The chain crosses the membrane as a helical span at residues 137–157 (FGMISVSGVFSVTFSVIFAYV). Over 158–170 (ADFTQEHERSTAY) the chain is Extracellular. The helical transmembrane segment at 171–191 (GWVSATFAASLVSSPAIGTYL) threads the bilayer. Residues 192–198 (SSNYGDS) lie on the Cytoplasmic side of the membrane. Residues 199-219 (LVVLVATVVALLDICFILVAV) traverse the membrane as a helical segment. At 220-257 (PESLPEKIRPASWGAQISWKQADPFASLKKVGKDSTVL) the chain is on the extracellular side. A helical membrane pass occupies residues 258 to 278 (LICITVFLSYLPEAGQYSSFF). The Cytoplasmic portion of the chain corresponds to 279–283 (LYLRQ). A helical transmembrane segment spans residues 284-304 (VIGFGSVKIVAFIAMVGILSI). Residues 305–323 (LAQTVFLSKLMRSLGNKNT) lie on the Extracellular side of the membrane. Residues 324–344 (VLLGLGFQILQLAWYGFGAQA) traverse the membrane as a helical segment. The Cytoplasmic segment spans residues 345 to 347 (WMM). The chain crosses the membrane as a helical span at residues 348 to 368 (WAAGTVAAMSSITFPAVSALI). The Extracellular segment spans residues 369-389 (SRNAESDQQGVAQGIITGIRG). Residues 390-410 (LCNGLGPALYGFIFYLFHVEL) traverse the membrane as a helical segment. The Cytoplasmic segment spans residues 411-430 (NELGPKLDSDNDPLQGAFIP). Residues 431–451 (GPPFLFGACIVLMSFLVALFI) form a helical membrane-spanning segment. The Extracellular portion of the chain corresponds to 452–507 (PEYRKTGGVQKHNNSISGSLSTPPERGSDEDIEPLLQDSNIWELSSEEPGNQCTEL). Polar residues predominate over residues 462-473 (KHNNSISGSLST). The tract at residues 462–483 (KHNNSISGSLSTPPERGSDEDI) is disordered. N464 carries N-linked (GlcNAc...) asparagine glycosylation.

This sequence belongs to the major facilitator superfamily.

It localises to the membrane. The sequence is that of Hippocampus abundant transcript-like protein 1 from Rattus norvegicus (Rat).